A 223-amino-acid chain; its full sequence is Small ribosomal subunit protein uS3 (223 aa).

Positions 39 to 107 (VREFLKQKLK…PVQVSVEEIR (69 aa)) constitute a KH type-2 domain.

This sequence belongs to the universal ribosomal protein uS3 family. In terms of assembly, part of the 30S ribosomal subunit. Forms a tight complex with proteins S10 and S14.

In terms of biological role, binds the lower part of the 30S subunit head. Binds mRNA in the 70S ribosome, positioning it for translation. The protein is Small ribosomal subunit protein uS3 of Methylococcus capsulatus (strain ATCC 33009 / NCIMB 11132 / Bath).